The primary structure comprises 468 residues: 3-isopropylmalate dehydratase large subunit (468 aa).

Cys-346, Cys-406, and Cys-409 together coordinate [4Fe-4S] cluster.

It belongs to the aconitase/IPM isomerase family. LeuC type 1 subfamily. As to quaternary structure, heterodimer of LeuC and LeuD. Requires [4Fe-4S] cluster as cofactor.

It carries out the reaction (2R,3S)-3-isopropylmalate = (2S)-2-isopropylmalate. It participates in amino-acid biosynthesis; L-leucine biosynthesis; L-leucine from 3-methyl-2-oxobutanoate: step 2/4. In terms of biological role, catalyzes the isomerization between 2-isopropylmalate and 3-isopropylmalate, via the formation of 2-isopropylmaleate. In Pseudoalteromonas atlantica (strain T6c / ATCC BAA-1087), this protein is 3-isopropylmalate dehydratase large subunit.